The primary structure comprises 137 residues: Large ribosomal subunit protein uL16 (137 aa).

Belongs to the universal ribosomal protein uL16 family. Part of the 50S ribosomal subunit.

Its function is as follows. Binds 23S rRNA and is also seen to make contacts with the A and possibly P site tRNAs. This Baumannia cicadellinicola subsp. Homalodisca coagulata protein is Large ribosomal subunit protein uL16.